We begin with the raw amino-acid sequence, 207 residues long: Ciliary microtubule-associated protein 3 (207 aa).

In terms of assembly, interacts with proteins involved in ciliary transport, including ARL13B, CETN1, KIF3A, RAB6A, RAB8A, TUBB1 and TUBG1. Interacts with AURKA. In terms of tissue distribution, expressed in tissues rich in ciliated cells, such as lung, kidney, vas deferens and testis. Both isoforms 1 and 2 are expressed in testis.

It localises to the golgi apparatus. It is found in the golgi stack. The protein localises to the trans-Golgi network. The protein resides in the nucleus. Its subcellular location is the cytoplasm. It localises to the cytoplasmic vesicle. During primary cilia disassembly, involved in cilia disassembly. Required specifically to control cilia retraction as well as the liberation and duplication of the basal body/centrosome. May act by stimulating AURKA activity at the basal body in a cell cycle-dependent manner. The sequence is that of Ciliary microtubule-associated protein 3 (Cimap3) from Mus musculus (Mouse).